Reading from the N-terminus, the 129-residue chain is L-ectoine synthase (129 aa).

Belongs to the ectoine synthase family.

The catalysed reaction is (2S)-4-acetamido-2-aminobutanoate = L-ectoine + H2O. It functions in the pathway amine and polyamine biosynthesis; ectoine biosynthesis; L-ectoine from L-aspartate 4-semialdehyde: step 3/3. Functionally, catalyzes the circularization of gamma-N-acetyl-alpha,gamma-diaminobutyric acid (ADABA) to ectoine (1,4,5,6-tetrahydro-2-methyl-4-pyrimidine carboxylic acid), which is an excellent osmoprotectant. The chain is L-ectoine synthase from Marinomonas sp. (strain MWYL1).